The primary structure comprises 837 residues: Amyloid-beta A4 precursor protein-binding family A member 1 (837 aa).

Disordered stretches follow at residues 1–93 (MNHL…DTAE), 238–342 (YDER…SKEK), and 358–435 (EEVK…ESRK). Residues 23-38 (ESVEADLEHPEVEEEQ) show a composition bias toward acidic residues. Phosphoserine is present on residues Ser-78, Ser-242, Ser-246, Ser-248, Ser-263, Ser-280, and Ser-285. A munc-18-1 binding region spans residues 226 to 314 (YRQEALGARL…TPAGGRPDSP (89 aa)). Basic and acidic residues predominate over residues 238-254 (YDERSDGESDSPEKEAE). Thr-305 carries the post-translational modification Phosphothreonine. A phosphoserine mark is found at Ser-313 and Ser-367. Position 370 is a phosphothreonine (Thr-370). The segment at 373–436 (EPKEPIWVMR…ASTNKESRKS (64 aa)) is LIN-2/CASK binding. The segment covering 387–398 (PTRDCDDQRPMD) has biased composition (basic and acidic residues). Positions 399 to 418 (GDSPSPGSSSPLGAESSSTS) are enriched in low complexity. Phosphoserine is present on residues Ser-401, Ser-403, Ser-408, and Ser-568. The region spanning 457–643 (DGIIFAANYL…LLNTQDMYND (187 aa)) is the PID domain. Residues 626–641 (LSQKEYSDLLNTQDMY) form an autoinhibitory helix linker region. PDZ domains follow at residues 656–742 (DVFI…IVRC) and 747–822 (TVLI…TMPA).

Part of a multimeric complex containing STXBP1 and STX1A. Interacts with STXBP1. Also part of the brain-specific heterotrimeric complex LIN-10/X11-alpha, LIN-2/CASK, and LIN7. Component of the brain-specific heterotrimeric complex (LIN-10-LIN-2-LIN-7 complex) composed of at least APBA1, CASK, and LIN7, which associates with the motor protein KIF17 to transport vesicles along microtubules. Within the complex, interacts (via PDZ domain) with the motor protein KIF17; the interaction is direct and is required for association of KIF17 with the cargo that is to be transported. Both isoform 1 and isoform 2 bind to the cytoplasmic domain of amyloid protein (APP). Interacts (via PDZ 1 and 2 domains) with FSPB. Isoform 2, but not isoform 1, interacts (via its truncated PID domain) with active, GTP-bound RAB6A and RAB6B. Brain and spinal cord. Isoform 2 is expressed in testis and brain, but not detected in lung, liver or spleen.

The protein resides in the cytoplasm. Its subcellular location is the perinuclear region. It localises to the nucleus. The protein localises to the golgi apparatus. Putative function in synaptic vesicle exocytosis by binding to Munc18-1, an essential component of the synaptic vesicle exocytotic machinery. May modulate processing of the amyloid-beta precursor protein (APP) and hence formation of APP-beta. Component of the LIN-10-LIN-2-LIN-7 complex, which associates with the motor protein KIF17 to transport vesicles containing N-methyl-D-aspartate (NMDA) receptor subunit NR2B along microtubules. The polypeptide is Amyloid-beta A4 precursor protein-binding family A member 1 (APBA1) (Homo sapiens (Human)).